A 470-amino-acid chain; its full sequence is MTPFMTEDFLLDTEFARRLYHDYAKDQPIFDYHCHLPPQQIAEDYRFKNLYDIWLKGDHYKWRAMRTNGVAERLCTGDASDREKFDAWAATVPHTIGNPLYHWTHLELRRPFGITGKLLSPSTADEIWNECNELLAQDNFSARGIMQQMNVKMVGTTDDPIDSLEHHAEIAKDGSFTIKVLPSWRPDKAFNIEQATFNDYMAKLGEVSDTDIRRFADLQTALTKRLDHFAAHGCKVSDHALDVVMFAEANEAELDSILARRLAGETLSEHEVAQFKTAVLVFLGAEYARRGWVQQYHIGALRNNNLRQFKLLGPDVGFDSINDRPMAEELSKLLSKQNEENLLPKTILYCLNPRDNEVLGTMIGNFQGEGMPGKMQFGSGWWFNDQKDGMERQMTQLAQLGLLSRFVGMLTDSRSFLSYTRHEYFRRILCQMIGRWVEAGEAPADINLLGEMVKNICFNNARDYFAIELN.

Belongs to the metallo-dependent hydrolases superfamily. Uronate isomerase family.

It catalyses the reaction D-glucuronate = D-fructuronate. The enzyme catalyses aldehydo-D-galacturonate = keto-D-tagaturonate. It functions in the pathway carbohydrate metabolism; pentose and glucuronate interconversion. This is Uronate isomerase from Shigella boydii serotype 4 (strain Sb227).